Here is a 49-residue protein sequence, read N- to C-terminus: Large ribosomal subunit protein bL33B (49 aa).

This sequence belongs to the bacterial ribosomal protein bL33 family.

This is Large ribosomal subunit protein bL33B from Geobacillus thermodenitrificans (strain NG80-2).